We begin with the raw amino-acid sequence, 92 residues long: Small ribosomal subunit protein uS19 (92 aa).

The protein belongs to the universal ribosomal protein uS19 family.

Protein S19 forms a complex with S13 that binds strongly to the 16S ribosomal RNA. The protein is Small ribosomal subunit protein uS19 of Streptococcus agalactiae serotype Ia (strain ATCC 27591 / A909 / CDC SS700).